Here is a 232-residue protein sequence, read N- to C-terminus: Large ribosomal subunit protein uL1 (232 aa).

Belongs to the universal ribosomal protein uL1 family. In terms of assembly, part of the 50S ribosomal subunit.

Binds directly to 23S rRNA. The L1 stalk is quite mobile in the ribosome, and is involved in E site tRNA release. Its function is as follows. Protein L1 is also a translational repressor protein, it controls the translation of the L11 operon by binding to its mRNA. This chain is Large ribosomal subunit protein uL1, found in Xanthomonas axonopodis pv. citri (strain 306).